The following is a 319-amino-acid chain: Beta-ketoacyl-[acyl-carrier-protein] synthase III (319 aa).

Active-site residues include Cys-113 and His-246. An ACP-binding region spans residues 247 to 251; sequence QANRR. Asn-276 is an active-site residue.

Belongs to the thiolase-like superfamily. FabH family. As to quaternary structure, homodimer.

It is found in the cytoplasm. The enzyme catalyses malonyl-[ACP] + acetyl-CoA + H(+) = 3-oxobutanoyl-[ACP] + CO2 + CoA. The protein operates within lipid metabolism; fatty acid biosynthesis. Its function is as follows. Catalyzes the condensation reaction of fatty acid synthesis by the addition to an acyl acceptor of two carbons from malonyl-ACP. Catalyzes the first condensation reaction which initiates fatty acid synthesis and may therefore play a role in governing the total rate of fatty acid production. Possesses both acetoacetyl-ACP synthase and acetyl transacylase activities. Its substrate specificity determines the biosynthesis of branched-chain and/or straight-chain of fatty acids. This is Beta-ketoacyl-[acyl-carrier-protein] synthase III from Rhizorhabdus wittichii (strain DSM 6014 / CCUG 31198 / JCM 15750 / NBRC 105917 / EY 4224 / RW1) (Sphingomonas wittichii).